A 262-amino-acid chain; its full sequence is Tryptophan synthase alpha chain (262 aa).

Catalysis depends on proton acceptor residues glutamate 48 and aspartate 59.

The protein belongs to the TrpA family. As to quaternary structure, tetramer of two alpha and two beta chains.

The enzyme catalyses (1S,2R)-1-C-(indol-3-yl)glycerol 3-phosphate + L-serine = D-glyceraldehyde 3-phosphate + L-tryptophan + H2O. It participates in amino-acid biosynthesis; L-tryptophan biosynthesis; L-tryptophan from chorismate: step 5/5. Its function is as follows. The alpha subunit is responsible for the aldol cleavage of indoleglycerol phosphate to indole and glyceraldehyde 3-phosphate. This Helicobacter pylori (strain HPAG1) protein is Tryptophan synthase alpha chain.